The following is a 298-amino-acid chain: DegV domain-containing protein UU535 (298 aa).

The 283-residue stretch at 5 to 287 (FLIMTDSSTT…KGALGIQVIA (283 aa)) folds into the DegV domain. Residues serine 65 and serine 96 each coordinate hexadecanoate.

In terms of biological role, may bind long-chain fatty acids, such as palmitate, and may play a role in lipid transport or fatty acid metabolism. This Ureaplasma parvum serovar 3 (strain ATCC 700970) protein is DegV domain-containing protein UU535.